A 140-amino-acid chain; its full sequence is MAIERTFSIIKPDATERNLTGAINALIEKAGLRIVAQKRIRMTREQAETFYAVHKARPFFGELVDFMISGPVVVQVLEGEGAILKYRDVMGATDPSKAADGTIRKLHAKSIGENSVHGSDAAETAAIEIAQFFSGNEIVG.

ATP-binding residues include K11, F59, R87, T93, R104, and N114. H117 functions as the Pros-phosphohistidine intermediate in the catalytic mechanism.

The protein belongs to the NDK family. In terms of assembly, homotetramer. The cofactor is Mg(2+).

It is found in the cytoplasm. The catalysed reaction is a 2'-deoxyribonucleoside 5'-diphosphate + ATP = a 2'-deoxyribonucleoside 5'-triphosphate + ADP. The enzyme catalyses a ribonucleoside 5'-diphosphate + ATP = a ribonucleoside 5'-triphosphate + ADP. Major role in the synthesis of nucleoside triphosphates other than ATP. The ATP gamma phosphate is transferred to the NDP beta phosphate via a ping-pong mechanism, using a phosphorylated active-site intermediate. This Bradyrhizobium sp. (strain BTAi1 / ATCC BAA-1182) protein is Nucleoside diphosphate kinase.